The primary structure comprises 92 residues: Small ribosomal subunit protein uS15c (92 aa).

The protein belongs to the universal ribosomal protein uS15 family. Part of the 30S ribosomal subunit.

It localises to the plastid. Its subcellular location is the chloroplast. The protein is Small ribosomal subunit protein uS15c (rps15) of Guizotia abyssinica (Niger).